Consider the following 150-residue polypeptide: MLGAALRRCAVAATTWAGPRGLLHSARTPGPAAAIQSVRCYSHGSHETDEEFDARWVTYFNKPDIDAWELRKGINTLVTYDLVPEPKIIDAALRACRRLNDFASTVRILEAVKDKAGPHKEIYPYVIQELRPTLNELGISTPEELGLDKV.

Residues 1 to 41 (MLGAALRRCAVAATTWAGPRGLLHSARTPGPAAAIQSVRCY) constitute a mitochondrion transit peptide. Residues 2-20 (LGAALRRCAVAATTWAGPR) carry the SIFI-degron motif. K87 and K113 each carry N6-acetyllysine. At T141 the chain carries Phosphothreonine.

The protein belongs to the cytochrome c oxidase subunit 5A family. Component of the cytochrome c oxidase (complex IV, CIV), a multisubunit enzyme composed of 14 subunits. The complex is composed of a catalytic core of 3 subunits MT-CO1, MT-CO2 and MT-CO3, encoded in the mitochondrial DNA, and 11 supernumerary subunits COX4I, COX5A, COX5B, COX6A, COX6B, COX6C, COX7A, COX7B, COX7C, COX8 and NDUFA4, which are encoded in the nuclear genome. The complex exists as a monomer or a dimer and forms supercomplexes (SCs) in the inner mitochondrial membrane with NADH-ubiquinone oxidoreductase (complex I, CI) and ubiquinol-cytochrome c oxidoreductase (cytochrome b-c1 complex, complex III, CIII), resulting in different assemblies (supercomplex SCI(1)III(2)IV(1) and megacomplex MCI(2)III(2)IV(2)). Interacts with AFG1L. Interacts with RAB5IF. In response to mitochondrial stress, the precursor protein is ubiquitinated by the SIFI complex in the cytoplasm before mitochondrial import, leading to its degradation. Within the SIFI complex, UBR4 initiates ubiquitin chain that are further elongated or branched by KCMF1.

It is found in the mitochondrion inner membrane. It functions in the pathway energy metabolism; oxidative phosphorylation. Component of the cytochrome c oxidase, the last enzyme in the mitochondrial electron transport chain which drives oxidative phosphorylation. The respiratory chain contains 3 multisubunit complexes succinate dehydrogenase (complex II, CII), ubiquinol-cytochrome c oxidoreductase (cytochrome b-c1 complex, complex III, CIII) and cytochrome c oxidase (complex IV, CIV), that cooperate to transfer electrons derived from NADH and succinate to molecular oxygen, creating an electrochemical gradient over the inner membrane that drives transmembrane transport and the ATP synthase. Cytochrome c oxidase is the component of the respiratory chain that catalyzes the reduction of oxygen to water. Electrons originating from reduced cytochrome c in the intermembrane space (IMS) are transferred via the dinuclear copper A center (CU(A)) of subunit 2 and heme A of subunit 1 to the active site in subunit 1, a binuclear center (BNC) formed by heme A3 and copper B (CU(B)). The BNC reduces molecular oxygen to 2 water molecules using 4 electrons from cytochrome c in the IMS and 4 protons from the mitochondrial matrix. The polypeptide is Cytochrome c oxidase subunit 5A, mitochondrial (COX5A) (Macaca mulatta (Rhesus macaque)).